A 235-amino-acid chain; its full sequence is Protein Thf1 (235 aa).

Positions Leu-179–Thr-228 form a coiled coil.

This sequence belongs to the THF1 family.

In terms of biological role, may be involved in photosynthetic membrane biogenesis. This chain is Protein Thf1, found in Rippkaea orientalis (strain PCC 8801 / RF-1) (Cyanothece sp. (strain PCC 8801)).